Reading from the N-terminus, the 549-residue chain is Arginine-containing cyclodipeptide synthase amaA (549 aa).

A Conserved DDXXE motif motif is present at residues 445–449 (DDRAE).

Belongs to the arginine-containing cyclodipeptide synthase family.

The enzyme catalyses L-prolyl-tRNA(Pro) + L-arginyl-tRNA(Arg) = cyclo(L-arginyl-L-prolyl) + tRNA(Pro) + tRNA(Arg) + 2 H(+). The protein operates within secondary metabolite biosynthesis. Functionally, arginine-containing cyclodipeptide synthase; part of the cluster that mediates the biosynthesis of a highly modified cyclo-arginine-proline dipeptide (cRP). Within the pathway, amaA acts as the scaffold-generating enzyme and is responsible for formation of the cyclo-Arg-Pro diketopiperazine (cRW) from L-arginyl-tRNA(Arg) + L-prolyl-tRNA(Pro). Additional enzymes from the cluster then further modify the cyclo-Arg-Pro diketopiperazine (cRW) scaffold. This Apiospora montagnei (Sphaeria apiospora) protein is Arginine-containing cyclodipeptide synthase amaA.